We begin with the raw amino-acid sequence, 379 residues long: Cobalt-precorrin-5B C(1)-methyltransferase (379 aa).

The protein belongs to the CbiD family.

The enzyme catalyses Co-precorrin-5B + S-adenosyl-L-methionine = Co-precorrin-6A + S-adenosyl-L-homocysteine. It participates in cofactor biosynthesis; adenosylcobalamin biosynthesis; cob(II)yrinate a,c-diamide from sirohydrochlorin (anaerobic route): step 6/10. Catalyzes the methylation of C-1 in cobalt-precorrin-5B to form cobalt-precorrin-6A. This Salmonella typhimurium (strain LT2 / SGSC1412 / ATCC 700720) protein is Cobalt-precorrin-5B C(1)-methyltransferase.